Reading from the N-terminus, the 276-residue chain is Caspase-6 (276 aa).

Residues 1–5 (MTETD) constitute a propeptide that is removed on maturation. The tract at residues 25–27 (KRR) is tri-arginine exosite. Serine 62 carries the post-translational modification Phosphoserine. Histidine 104 is a catalytic residue. The interval 108-125 (NHVYAYDAKIEIQTLTGL) is 130's region. Cysteine 146 is a catalytic residue. Positions 163–175 (HQTDKLDNVTQVD) are excised as a propeptide. Serine 239 carries the phosphoserine modification. 2 S-palmitoyl cysteine lipidation sites follow: cysteine 246 and cysteine 259.

It belongs to the peptidase C14A family. As to quaternary structure, heterotetramer that consists of two anti-parallel arranged heterodimers, each one formed by a 18 kDa (p18) and a 11 kDa (p11) subunit. Interacts with BIRC6/bruce. Interacts with RIPK3. In terms of assembly, heterotetramer that consists of two anti-parallel arranged heterodimers, each one formed by a 18 kDa (Caspase-6 subunit p18) and a 11 kDa (Caspase-6 subunit p11) subunit. Phosphorylated by NUAK1; phosphorylation inhibits self-activation. Phosphorylation at Ser-239 by AMP-activated protein kinase (PRKAA1 or PRKAA2) inhibits autocleavage, preventing caspase activation, thereby preventing hepatocyte apoptosis. In terms of processing, palmitoylation by ZDHHC17 blocks dimerization and subsequent activation, leading to inhibit the cysteine protease activity. Post-translationally, can be cleaved and activated by different caspases, depending on the context. Cleaved and activated by caspase-8 (CASP8) and subsequently by caspase-3 (CASP3). Can also undergo autoactivation by mediating autocleavage at Asp-162 and Asp-175, while it is not able to cleave its N-terminal disordered prodomain. Cleaved and activated by CASP1, possibly in the context of inflammation. In terms of tissue distribution, highly expressed in lung, liver, kidney, testis, and heart. Lower levels in spleen, skeletal muscle and brain. Expressed in neurons.

It localises to the cytoplasm. Its subcellular location is the nucleus. It catalyses the reaction Strict requirement for Asp at position P1 and has a preferred cleavage sequence of Val-Glu-His-Asp-|-.. Its activity is regulated as follows. During activation, the N-terminal disordered prodomain is removed by cleavage. Concomitantly, double cleavage gives rise to a large 18-kDa and a small 11-kDa subunit. The two large and two small subunits then assemble to form the active CASP6 complex. Can be cleaved and activated by different caspases, depending on the context. Cleaved and activated by caspase-8 (CASP8) and subsequently by caspase-3 (CASP3). Can also undergo autoactivation by mediating autocleavage at Asp-162 and Asp-175, while it is not able to cleave its N-terminal disordered prodomain. Intramolecular cleavage at Asp-175 is a prerequisite for CASP6 self-activation. Cleaved and activated by CASP1 in neurons, possibly in the context of inflammation. Phosphorylation at Ser-239 inhibits autocleavage, preventing caspase activation. Functionally, cysteine protease that plays essential roles in programmed cell death, axonal degeneration, development and innate immunity. Acts as a non-canonical executioner caspase during apoptosis: localizes in the nucleus and cleaves the nuclear structural protein NUMA1 and lamin A/LMNA thereby inducing nuclear shrinkage and fragmentation. Lamin-A/LMNA cleavage is required for chromatin condensation and nuclear disassembly during apoptotic execution. Acts as a regulator of liver damage by promoting hepatocyte apoptosis: in absence of phosphorylation by AMP-activated protein kinase (AMPK), catalyzes cleavage of BID, leading to cytochrome c release, thereby participating in nonalcoholic steatohepatitis. Cleaves PARK7/DJ-1 in cells undergoing apoptosis. Involved in intrinsic apoptosis by mediating cleavage of RIPK1. Furthermore, cleaves many transcription factors such as NF-kappa-B and cAMP response element-binding protein/CREBBP. Cleaves phospholipid scramblase proteins XKR4 and XKR9. In addition to apoptosis, involved in different forms of programmed cell death. Plays an essential role in defense against viruses by acting as a central mediator of the ZBP1-mediated pyroptosis, apoptosis, and necroptosis (PANoptosis), independently of its cysteine protease activity. PANoptosis is a unique inflammatory programmed cell death, which provides a molecular scaffold that allows the interactions and activation of machinery required for inflammasome/pyroptosis, apoptosis and necroptosis. Mechanistically, interacts with RIPK3 and enhances the interaction between RIPK3 and ZBP1, leading to ZBP1-mediated inflammasome activation and cell death. Plays an essential role in axon degeneration during axon pruning which is the remodeling of axons during neurogenesis but not apoptosis. Regulates B-cell programs both during early development and after antigen stimulation. In terms of biological role, (Microbial infection) Proteolytically cleaves the N protein of coronaviruses. The cleavage leads to two fragments and modulates coronavirus replication by regulating IFN signaling. The two fragments produced by the cleavage interact with IRF3 inhibiting its nuclear translocation after activation and reduce the expression of IFNB and IFN-stimulated genes. The sequence is that of Caspase-6 from Mus musculus (Mouse).